The following is a 290-amino-acid chain: RxLR effector protein Avr4 (290 aa).

The first 24 residues, 1–24 (MRSLHILLVITASLLASLAVSAEA), serve as a signal peptide directing secretion. Residues 33 to 56 (VVENNKDKSRFLRDGGTTEAQTDE) form a disordered region. Over residues 36 to 45 (NNKDKSRFLR) the composition is skewed to basic and acidic residues. A RxLR-dEER motif is present at residues 42–58 (RFLRDGGTTEAQTDEER). Residues 118-141 (KYERMQWQKLNEGQTLTYMRVGDR) form a W1 motif region. The interval 151–174 (QLLRWVAQKKTVKSVYDDLQIEGF) is W2 motif. Residues 224-247 (VFEKWAMEGTHIKSVIKTLNLNNK) form a W3 motif region. A glycan (N-linked (GlcNAc...) asparagine) is linked at Asn-246. The y motif stretch occupies residues 249-270 (ASEMANNENFPALLKYVKLYLD).

This sequence belongs to the RxLR effector family.

Its subcellular location is the secreted. It localises to the host cytoplasm. The protein resides in the host nucleus. It is found in the host nucleolus. The protein localises to the host cytoskeleton. Functionally, secreted effector that acts as an elicitor of hypersensitive response (HR) specifically on plants carrying defense protein R4, through its interaction with this protein. The chain is RxLR effector protein Avr4 from Phytophthora mirabilis.